The chain runs to 318 residues: NADH-ubiquinone oxidoreductase chain 1 (318 aa).

Transmembrane regions (helical) follow at residues 2 to 22 (FMAN…FLTL), 69 to 89 (MLYL…WTPL), 98 to 118 (FNLG…SILW), 140 to 160 (ISYE…SGSF), 171 to 191 (HSWL…STLA), 222 to 242 (LFFM…TTIF), 253 to 273 (ETYS…FLWI), and 285 to 305 (LMHL…MWYI).

Belongs to the complex I subunit 1 family. Core subunit of respiratory chain NADH dehydrogenase (Complex I) which is composed of 45 different subunits.

The protein localises to the mitochondrion inner membrane. It catalyses the reaction a ubiquinone + NADH + 5 H(+)(in) = a ubiquinol + NAD(+) + 4 H(+)(out). Its function is as follows. Core subunit of the mitochondrial membrane respiratory chain NADH dehydrogenase (Complex I) which catalyzes electron transfer from NADH through the respiratory chain, using ubiquinone as an electron acceptor. Essential for the catalytic activity and assembly of complex I. The polypeptide is NADH-ubiquinone oxidoreductase chain 1 (MT-ND1) (Saguinus leucopus (Silvery-brown bare-face tamarin)).